A 209-amino-acid polypeptide reads, in one-letter code: Large ribosomal subunit protein bL25 (209 aa).

A disordered region spans residues 185–209 (SKATTGEEEGAEAAGEGEEAEEKPE). Acidic residues predominate over residues 190-209 (GEEEGAEAAGEGEEAEEKPE).

This sequence belongs to the bacterial ribosomal protein bL25 family. CTC subfamily. In terms of assembly, part of the 50S ribosomal subunit; part of the 5S rRNA/L5/L18/L25 subcomplex. Contacts the 5S rRNA. Binds to the 5S rRNA independently of L5 and L18.

This is one of the proteins that binds to the 5S RNA in the ribosome where it forms part of the central protuberance. This is Large ribosomal subunit protein bL25 from Syntrophomonas wolfei subsp. wolfei (strain DSM 2245B / Goettingen).